A 140-amino-acid polypeptide reads, in one-letter code: Nucleoside diphosphate kinase (140 aa).

Residues K11, F59, R87, T93, R104, and N114 each contribute to the ATP site. H117 (pros-phosphohistidine intermediate) is an active-site residue.

This sequence belongs to the NDK family. Homotetramer. It depends on Mg(2+) as a cofactor.

The protein localises to the cytoplasm. It carries out the reaction a 2'-deoxyribonucleoside 5'-diphosphate + ATP = a 2'-deoxyribonucleoside 5'-triphosphate + ADP. The enzyme catalyses a ribonucleoside 5'-diphosphate + ATP = a ribonucleoside 5'-triphosphate + ADP. Major role in the synthesis of nucleoside triphosphates other than ATP. The ATP gamma phosphate is transferred to the NDP beta phosphate via a ping-pong mechanism, using a phosphorylated active-site intermediate. The sequence is that of Nucleoside diphosphate kinase from Rhodovulum sulfidophilum (Rhodobacter sulfidophilus).